The sequence spans 709 residues: Phosphate acetyltransferase (709 aa).

Residues 389–709 (EFCYRLKILS…TIALTSIQSL (321 aa)) form a phosphate acetyltransferase region.

This sequence in the N-terminal section; belongs to the CobB/CobQ family. The protein in the C-terminal section; belongs to the phosphate acetyltransferase and butyryltransferase family. As to quaternary structure, homohexamer.

The protein localises to the cytoplasm. The enzyme catalyses acetyl-CoA + phosphate = acetyl phosphate + CoA. It participates in metabolic intermediate biosynthesis; acetyl-CoA biosynthesis; acetyl-CoA from acetate: step 2/2. Its function is as follows. Involved in acetate metabolism. The protein is Phosphate acetyltransferase (pta) of Buchnera aphidicola subsp. Schizaphis graminum (strain Sg).